Here is a 326-residue protein sequence, read N- to C-terminus: Hairy/enhancer-of-split related with YRPW motif-like protein (326 aa).

The tract at residues 1 to 56 is disordered; that stretch reads MKRPRAPSGSDGESDGPIDVGQENDLSQMARPLTTPSPSQMQARKKRRGIIEKRRR. The tract at residues 42–111 is transcriptional repression and interaction with NCOR1 and SIN3A; that stretch reads QARKKRRGII…GGTGFFDARA (70 aa). In terms of domain architecture, bHLH spans 43-98; sequence ARKKRRGIIEKRRRDRINSSLSELRRLVPTAFEKQGSSKLEKAEVLQMTVDHLKML. An Orange domain is found at 116-153; that stretch reads FRSIGFRECLTEVIRYLGVLEGPSSHADPVRIRLLSHL. Disordered stretches follow at residues 223-260 and 272-306; these read HRPA…PPPT and PIPP…PTGR. The segment covering 292 to 305 has biased composition (low complexity); sequence SGSISSPCPSGPTG.

Belongs to the HEY family. As to quaternary structure, interacts with HES1, HDAC1, NCOR1 and SIN3A. Self-associates. Interacts with GATA4, GATA6, HEY1 and HEY2. As to expression, expressed in heart and at lower levels in brain, lung, muscle, ovary and testis.

It is found in the nucleus. Functionally, transcriptional repressor which binds preferentially to the canonical E box sequence 5'-CACGTG-3'. Downstream effector of Notch signaling required for cardiovascular development. Specifically required for the Notch-induced endocardial epithelial to mesenchymal transition, which is itself criticial for cardiac valve and septum development. Represses transcription by the cardiac transcriptional activators GATA4 and GATA6. This chain is Hairy/enhancer-of-split related with YRPW motif-like protein (Heyl), found in Mus musculus (Mouse).